The primary structure comprises 515 residues: Histidine ammonia-lyase (515 aa).

The segment at residues 146 to 148 is a cross-link (5-imidazolinone (Ala-Gly)); it reads ASG. 2,3-didehydroalanine (Ser) is present on Ser147.

Belongs to the PAL/histidase family. In terms of processing, contains an active site 4-methylidene-imidazol-5-one (MIO), which is formed autocatalytically by cyclization and dehydration of residues Ala-Ser-Gly.

The protein localises to the cytoplasm. It carries out the reaction L-histidine = trans-urocanate + NH4(+). Its pathway is amino-acid degradation; L-histidine degradation into L-glutamate; N-formimidoyl-L-glutamate from L-histidine: step 1/3. This chain is Histidine ammonia-lyase (hutH), found in Ralstonia nicotianae (strain ATCC BAA-1114 / GMI1000) (Ralstonia solanacearum).